The chain runs to 149 residues: D-aminoacyl-tRNA deacylase (149 aa).

The Gly-cisPro motif, important for rejection of L-amino acids motif lies at 137–138; it reads GP.

It belongs to the DTD family. As to quaternary structure, homodimer.

Its subcellular location is the cytoplasm. It carries out the reaction glycyl-tRNA(Ala) + H2O = tRNA(Ala) + glycine + H(+). The enzyme catalyses a D-aminoacyl-tRNA + H2O = a tRNA + a D-alpha-amino acid + H(+). In terms of biological role, an aminoacyl-tRNA editing enzyme that deacylates mischarged D-aminoacyl-tRNAs. Also deacylates mischarged glycyl-tRNA(Ala), protecting cells against glycine mischarging by AlaRS. Acts via tRNA-based rather than protein-based catalysis; rejects L-amino acids rather than detecting D-amino acids in the active site. By recycling D-aminoacyl-tRNA to D-amino acids and free tRNA molecules, this enzyme counteracts the toxicity associated with the formation of D-aminoacyl-tRNA entities in vivo and helps enforce protein L-homochirality. The sequence is that of D-aminoacyl-tRNA deacylase from Clostridium acetobutylicum (strain ATCC 824 / DSM 792 / JCM 1419 / IAM 19013 / LMG 5710 / NBRC 13948 / NRRL B-527 / VKM B-1787 / 2291 / W).